Reading from the N-terminus, the 548-residue chain is MFS-rype transporter paaT (548 aa).

Residues 1–10 are compositionally biased toward basic and acidic residues; sequence MEAPRSDQAH. A disordered region spans residues 1–32; the sequence is MEAPRSDQAHTDATTPMEAIRTTSLGTNNYGP. Positions 21–30 are enriched in polar residues; sequence RTTSLGTNNY. N-linked (GlcNAc...) asparagine glycans are attached at residues Asn70 and Asn93. Transmembrane regions (helical) follow at residues 100 to 120, 139 to 159, 174 to 194, 197 to 217, 224 to 244, 256 to 276, 332 to 352, 370 to 390, 411 to 431, 436 to 456, 471 to 493, and 505 to 525; these read WYCT…SSVI, LVVI…FAPM, ALAV…TLIV, LIDG…LADL, GVPM…GPLV, WLYW…TFTV, IVLF…MFFV, GLMF…APFV, LIPM…FAWT, LHWM…ILLY, AASA…VLFT, and ASTL…VFYF. Positions 258–269 match the Peroxisomal targeting signal motif; it reads YWIQLILAFVAW.

Belongs to the major facilitator superfamily. DHA1 family. Polyamines/proton antiporter (TC 2.A.1.2.16) subfamily.

The protein localises to the peroxisome membrane. Functionally, MFS-type transporter involved in penicillin production, most likely through the translocation of side-chain precursors (phenylacetic acid and phenoxyacetic acid) from the cytosol to the peroxisomal lumen across the peroxisomal membrane. This Penicillium rubens (strain ATCC 28089 / DSM 1075 / NRRL 1951 / Wisconsin 54-1255) (Penicillium chrysogenum) protein is MFS-rype transporter paaT.